The primary structure comprises 430 residues: D-galactonate transporter (430 aa).

Residues 1–17 (MDIPVNAAKPGRRRYLT) are Cytoplasmic-facing. Residues 18-39 (LVMIFITVVICYVDRANLAVAS) traverse the membrane as a helical segment. 2 residues coordinate D-galactonate: Tyr29 and Arg32. The Periplasmic segment spans residues 40–50 (AHIQEEFGITK). The chain crosses the membrane as a helical span at residues 51–74 (AEMGYVFSAFAWLYTLCQIPGGWF). Tyr64 serves as a coordination point for D-galactonate. The Cytoplasmic segment spans residues 75–81 (LDRVGSR). A helical membrane pass occupies residues 82-100 (VTYFIAIFGWSVATLFQGF). At 101 to 103 (ATG) the chain is on the periplasmic side. The helical transmembrane segment at 104–125 (LMSLIGLRAITGIFEAPAFPTN) threads the bilayer. The Cytoplasmic portion of the chain corresponds to 126-141 (NRMVTSWFPEHERASA). The chain crosses the membrane as a helical span at residues 142–164 (VGFYTSGQFVGLAFLTPLLIWIQ). The Periplasmic segment spans residues 165–168 (EMLS). Residues 169–190 (WHWVFIVTGGIGIIWSLIWFKV) form a helical membrane-spanning segment. Over 191-241 (YQPPRLTKGISKAELDYIRDGGGLVDGDAPVKKEARQPLTAKDWKLVFHRK) the chain is Cytoplasmic. A helical transmembrane segment spans residues 242–267 (LIGVYLGQFAVASTLWFFLTWFPNYL). The Periplasmic portion of the chain corresponds to 268–276 (TQEKGITAL). A helical transmembrane segment spans residues 277-297 (KAGFMTTVPFLAAFVGVLLSG). Topologically, residues 298 to 314 (WVADLLVRKGFSLGFAR) are cytoplasmic. Residues 315–333 (KTPIICGLLISTCIMGANY) form a helical membrane-spanning segment. Topologically, residues 334–336 (TND) are periplasmic. Residues 337-354 (PMMIMCLMALAFFGNGFA) traverse the membrane as a helical segment. Topologically, residues 355 to 373 (SITWSLVSSLAPMRLIGLT) are cytoplasmic. Trp358 provides a ligand contact to D-galactonate. A helical transmembrane segment spans residues 374-395 (GGVFNFAGGLGGITVPLVVGYL). At 396-400 (AQGYG) the chain is on the periplasmic side. The chain crosses the membrane as a helical span at residues 401-423 (FAPALVYISAVALIGALSYILLV). Topologically, residues 424 to 430 (GDVKRVG) are cytoplasmic.

It belongs to the major facilitator superfamily. Phthalate permease family.

The protein resides in the cell inner membrane. The catalysed reaction is D-galactonate(in) + H(+)(in) = D-galactonate(out) + H(+)(out). Functionally, involved in D-galactonate metabolism. Catalyzes the proton-dependent uptake of galactonate into the cell. The protein is D-galactonate transporter (dgoT) of Escherichia coli O6:H1 (strain CFT073 / ATCC 700928 / UPEC).